We begin with the raw amino-acid sequence, 380 residues long: MTTAKVNLLDFDRKGLRKFFTEELNEKAFRAEQVMKWIYHFGVDDFEQMNNINKKLREKLLHRCEIVAPIVSEAQHSADGTIKWAMSVGDQDVETVYIPDGDRATLCVSSQVGCALECKFCSTAQQGFNRNLKVSEIVGQIWRAAREIGLEKETGRRPITNVVMMGMGEPLLNMKNLIPSLELMLDDLGFSLSKRRVTVSTSGVVSGLDQMTDNIDVALAISLHAPNDALRSQIMPINDRWDIQDFLASVRRYIASSNANRGKVTVEYVLLDHVNDDMDHARELAELMKDTPCKINLIPFNPYPGSPYKKPSNSRIDRFQKTLMEYNYTVTVRKTRGDDIDAACGQLVGDVIDRTKRTKMLKAASEANLIAGDVIQVKAV.

Catalysis depends on Glu94, which acts as the Proton acceptor. The Radical SAM core domain maps to 100-339 (DGDRATLCVS…VTVRKTRGDD (240 aa)). Cys107 and Cys344 are oxidised to a cystine. [4Fe-4S] cluster is bound by residues Cys114, Cys118, and Cys121. Residues 168-169 (GE), Ser200, 222-224 (SLH), and Asn301 each bind S-adenosyl-L-methionine. Cys344 functions as the S-methylcysteine intermediate in the catalytic mechanism.

It belongs to the radical SAM superfamily. RlmN family. [4Fe-4S] cluster is required as a cofactor.

The protein localises to the cytoplasm. The catalysed reaction is adenosine(2503) in 23S rRNA + 2 reduced [2Fe-2S]-[ferredoxin] + 2 S-adenosyl-L-methionine = 2-methyladenosine(2503) in 23S rRNA + 5'-deoxyadenosine + L-methionine + 2 oxidized [2Fe-2S]-[ferredoxin] + S-adenosyl-L-homocysteine. The enzyme catalyses adenosine(37) in tRNA + 2 reduced [2Fe-2S]-[ferredoxin] + 2 S-adenosyl-L-methionine = 2-methyladenosine(37) in tRNA + 5'-deoxyadenosine + L-methionine + 2 oxidized [2Fe-2S]-[ferredoxin] + S-adenosyl-L-homocysteine. Functionally, specifically methylates position 2 of adenine 2503 in 23S rRNA and position 2 of adenine 37 in tRNAs. m2A2503 modification seems to play a crucial role in the proofreading step occurring at the peptidyl transferase center and thus would serve to optimize ribosomal fidelity. This Vibrio atlanticus (strain LGP32) (Vibrio splendidus (strain Mel32)) protein is Dual-specificity RNA methyltransferase RlmN.